The following is a 333-amino-acid chain: Plasminogen (333 aa).

One can recognise a Kringle 5 domain in the interval 4-83; sequence CMFGNGKGYR…LFDYCDVPQC (80 aa). 9 cysteine pairs are disulfide-bonded: Cys4-Cys83, Cys25-Cys66, Cys54-Cys78, Cys90-Cys208, Cys100-Cys108, Cys130-Cys146, Cys222-Cys289, Cys252-Cys268, and Cys279-Cys307. Residues 104–331 form the Peptidase S1 domain; it reads VVGGCVANPH…FVTWIEGIMR (228 aa). The residue at position 120 (Ser120) is a Phosphoserine. Residues His145 and Asp188 each act as charge relay system in the active site. Ser283 (charge relay system) is an active-site residue.

Belongs to the peptidase S1 family. Plasminogen subfamily. Interacts with CSPG4 and AMOT. Interacts (via the Kringle domains) with HRG; the interaction tethers PLG to the cell surface and enhances its activation. Interacts (via Kringle 4 domain) with ADA; the interaction stimulates PLG activation when in complex with DPP4. Angiostatin: Interacts with ATP5F1A; the interaction inhibits most of the angiogenic effects of angiostatin.

The protein localises to the secreted. It catalyses the reaction Preferential cleavage: Lys-|-Xaa &gt; Arg-|-Xaa, higher selectivity than trypsin. Converts fibrin into soluble products.. Converted into plasmin by plasminogen activators, both plasminogen and its activator being bound to fibrin. Activated with urokinase and high concentrations of streptokinase. Plasmin dissolves the fibrin of blood clots and acts as a proteolytic factor in a variety of other processes including embryonic development, tissue remodeling, tumor invasion, and inflammation. In ovulation, weakens the walls of the Graafian follicle. It activates the urokinase-type plasminogen activator, collagenases and several complement zymogens, such as C1, C4 and C5. Cleavage of fibronectin and laminin leads to cell detachment and apoptosis. Also cleaves fibrin, thrombospondin and von Willebrand factor. Its role in tissue remodeling and tumor invasion may be modulated by CSPG4. Binds to cells. This is Plasminogen (PLG) from Canis lupus familiaris (Dog).